A 426-amino-acid chain; its full sequence is Immunoglobulin mu Fc receptor (426 aa).

The N-terminal stretch at 1–16 (MNLWLWLLYFLPVSGT) is a signal peptide. Residues 24–121 (RLEVELGGSV…GKTQKVTLNV (98 aa)) form the Ig-like domain. 2 disulfide bridges follow: Cys37-Cys103 and Cys49-Cys58. Thr91 is subject to Phosphothreonine. Residues 178–212 (KTEAPPVHQPSTNTSVSRHPRVYGASSETPTKPSA) are disordered. The chain crosses the membrane as a helical span at residues 267 to 287 (FHILIPTFLGFLLLVLLGLVV). Disordered regions lie at residues 306–346 (RRMR…REPD) and 401–426 (DSNDYINIPGLPHLPSKPPGPRPSRQ). The span at 415-426 (PSKPPGPRPSRQ) shows a compositional bias: pro residues.

Interacts (via Ig-like domain) with IGHM (via CH4/Cmu4 domain), both secreted and membrane-bound IgM; the interaction is glycan-independent and multivalent theoretically involving up to eight binding sites for the IgM pentamer. In terms of processing, phosphorylated on both Tyr and Ser residues. Post-translationally, O-glycosylated. Sialylated. O-linked glycans regulate trafficking to the plasma membrane.

The protein localises to the cell membrane. Its subcellular location is the early endosome membrane. The protein resides in the golgi apparatus. It is found in the trans-Golgi network membrane. It localises to the lysosome membrane. High-affinity Fc receptor for immunoglobulin M (IgM), both secreted and membrane-bound IgM. Primarily regulates IgM transport and homeostasis. In lymphoid cells, enables exocytosis of membrane-bound IgM on the plasma membrane as well as endocytosis of IgM-antigen complexes toward lysosomes for degradation. In mucosal epithelium, mediates retrotranscytosis of antigen-IgM complexes across mucosal M cells toward antigen-presenting cells in mucosal lymphoid tissues. Triggers costimulatory signaling and mediates most of IgM effector functions involved in B cell development and primary immune response to infection. Likely limits tonic IgM BCR signaling to self-antigens for proper negative selection of autoreactive B cells in the bone marrow and for the maintenance of regulatory B cell pool in peripheral lymphoid organs. Mediates antibody responses to T cell-dependent and T cell-independent antigens and promotes induction of an efficient neutralizing IgG response. Engages in cross-talk with antigen-receptor signaling via the non-canonical NF-kappa-B, MAP kinases and calcium signaling pathways. This Rattus norvegicus (Rat) protein is Immunoglobulin mu Fc receptor.